We begin with the raw amino-acid sequence, 449 residues long: Trigger factor (449 aa).

In terms of domain architecture, PPIase FKBP-type spans 173–258 (GDRVTVDFVG…LKKVEWPHLP (86 aa)).

Belongs to the FKBP-type PPIase family. Tig subfamily.

The protein resides in the cytoplasm. The enzyme catalyses [protein]-peptidylproline (omega=180) = [protein]-peptidylproline (omega=0). In terms of biological role, involved in protein export. Acts as a chaperone by maintaining the newly synthesized protein in an open conformation. Functions as a peptidyl-prolyl cis-trans isomerase. This Burkholderia mallei (strain NCTC 10229) protein is Trigger factor.